The sequence spans 680 residues: Glutamine-dependent NAD(+) synthetase (680 aa).

In terms of domain architecture, CN hydrolase spans 12-276 (VRVAACTHHA…EHRSVADVDT (265 aa)). The active-site Proton acceptor; for glutaminase activity is the E52. The For glutaminase activity role is filled by K121. L-glutamine is bound at residue Y127. C176 acts as the Nucleophile; for glutaminase activity in catalysis. The L-glutamine site is built by S203 and R209. 366–373 (GVSGGLDS) is an ATP binding site. N456 lines the deamido-NAD(+) pocket. T480 contributes to the ATP binding site. Deamido-NAD(+) contacts are provided by residues E485, 490–493 (WSTY), and K636.

This sequence in the C-terminal section; belongs to the NAD synthetase family.

It catalyses the reaction deamido-NAD(+) + L-glutamine + ATP + H2O = L-glutamate + AMP + diphosphate + NAD(+) + H(+). It participates in cofactor biosynthesis; NAD(+) biosynthesis; NAD(+) from deamido-NAD(+) (L-Gln route): step 1/1. In terms of biological role, catalyzes the ATP-dependent amidation of deamido-NAD to form NAD. Uses L-glutamine as a nitrogen source. This Mycobacterium leprae (strain TN) protein is Glutamine-dependent NAD(+) synthetase.